Reading from the N-terminus, the 103-residue chain is Large ribosomal subunit protein P1 (103 aa).

Residues 66-103 form a disordered region; that stretch reads PAAGAPAAGAAGGAVEEKKEEKKAESEDESDDDMGLFD. Positions 80–90 are enriched in basic and acidic residues; the sequence is VEEKKEEKKAE. Residues 91–103 show a composition bias toward acidic residues; it reads SEDESDDDMGLFD.

Belongs to the eukaryotic ribosomal protein P1/P2 family. In terms of assembly, P1 and P2 exist as dimers at the large ribosomal subunit.

In terms of biological role, plays an important role in the elongation step of protein synthesis. This chain is Large ribosomal subunit protein P1, found in Polyorchis penicillatus (Hydromedusa).